The following is an 89-amino-acid chain: MARSLKKGPFVDHHLVKKVEAAAGSKKPIKTWSRRSMILPDMVGVTIAVHNGKNHIPVLVNENMVGHKLGEFAITRTFKGHGGDKKSGK.

The protein belongs to the universal ribosomal protein uS19 family.

Functionally, protein S19 forms a complex with S13 that binds strongly to the 16S ribosomal RNA. This chain is Small ribosomal subunit protein uS19, found in Stenotrophomonas maltophilia (strain K279a).